Here is a 251-residue protein sequence, read N- to C-terminus: Appressoria-specific virulence factor GAS1 (251 aa).

Positions 1-21 (MSLKSLIAATILAAPLVAGHG) are cleaved as a signal peptide. Positions 40-76 (VTSTPRDGTRRDPFQQDSTRFKGQQADTFGETVGGGQ) are disordered. Residues 54–66 (QQDSTRFKGQQAD) show a composition bias toward polar residues.

Its subcellular location is the cytoplasm. Its function is as follows. Appressoria-specific virulence factor required for appressorial penetration in host and lesion development. The polypeptide is Appressoria-specific virulence factor GAS1 (Pyricularia oryzae (strain 70-15 / ATCC MYA-4617 / FGSC 8958) (Rice blast fungus)).